The following is an 89-amino-acid chain: Small ribosomal subunit protein uS15 (89 aa).

Over residues 1-18 the composition is skewed to basic and acidic residues; sequence MALSAQEKDAIVKEHQTS. A disordered region spans residues 1–25; the sequence is MALSAQEKDAIVKEHQTSETDTGSP.

This sequence belongs to the universal ribosomal protein uS15 family. In terms of assembly, part of the 30S ribosomal subunit. Forms a bridge to the 50S subunit in the 70S ribosome, contacting the 23S rRNA.

Functionally, one of the primary rRNA binding proteins, it binds directly to 16S rRNA where it helps nucleate assembly of the platform of the 30S subunit by binding and bridging several RNA helices of the 16S rRNA. Forms an intersubunit bridge (bridge B4) with the 23S rRNA of the 50S subunit in the ribosome. The sequence is that of Small ribosomal subunit protein uS15 from Teredinibacter turnerae (strain ATCC 39867 / T7901).